A 508-amino-acid polypeptide reads, in one-letter code: Photosystem II CP47 reaction center protein (508 aa).

A run of 6 helical transmembrane segments spans residues 21–36, 101–115, 140–156, 203–218, 237–252, and 457–472; these read SVHI…WAGS, IVFS…IWHW, GIHL…FGAF, IAAG…FHLS, VLSS…AFVV, and SFAL…HGAR.

This sequence belongs to the PsbB/PsbC family. PsbB subfamily. PSII is composed of 1 copy each of membrane proteins PsbA, PsbB, PsbC, PsbD, PsbE, PsbF, PsbH, PsbI, PsbJ, PsbK, PsbL, PsbM, PsbT, PsbX, PsbY, PsbZ, Psb30/Ycf12, at least 3 peripheral proteins of the oxygen-evolving complex and a large number of cofactors. It forms dimeric complexes. Binds multiple chlorophylls. PSII binds additional chlorophylls, carotenoids and specific lipids. is required as a cofactor.

The protein resides in the plastid. The protein localises to the chloroplast thylakoid membrane. Functionally, one of the components of the core complex of photosystem II (PSII). It binds chlorophyll and helps catalyze the primary light-induced photochemical processes of PSII. PSII is a light-driven water:plastoquinone oxidoreductase, using light energy to abstract electrons from H(2)O, generating O(2) and a proton gradient subsequently used for ATP formation. This Nasturtium officinale (Watercress) protein is Photosystem II CP47 reaction center protein.